Reading from the N-terminus, the 346-residue chain is Biotin synthase (346 aa).

The 225-residue stretch at 40–264 (NEVQVSTLLS…MMPHSHVRLS (225 aa)) folds into the Radical SAM core domain. Cys55, Cys59, and Cys62 together coordinate [4Fe-4S] cluster. [2Fe-2S] cluster is bound by residues Cys99, Cys130, Cys190, and Arg262.

Belongs to the radical SAM superfamily. Biotin synthase family. As to quaternary structure, homodimer. It depends on [4Fe-4S] cluster as a cofactor. [2Fe-2S] cluster serves as cofactor.

It catalyses the reaction (4R,5S)-dethiobiotin + (sulfur carrier)-SH + 2 reduced [2Fe-2S]-[ferredoxin] + 2 S-adenosyl-L-methionine = (sulfur carrier)-H + biotin + 2 5'-deoxyadenosine + 2 L-methionine + 2 oxidized [2Fe-2S]-[ferredoxin]. The protein operates within cofactor biosynthesis; biotin biosynthesis; biotin from 7,8-diaminononanoate: step 2/2. Functionally, catalyzes the conversion of dethiobiotin (DTB) to biotin by the insertion of a sulfur atom into dethiobiotin via a radical-based mechanism. The chain is Biotin synthase from Colwellia psychrerythraea (strain 34H / ATCC BAA-681) (Vibrio psychroerythus).